A 215-amino-acid chain; its full sequence is Protein FAM167A (215 aa).

2 disordered regions span residues 1 to 26 (MSVP…PPDD) and 63 to 109 (RPAA…LTTG). The stretch at 124–157 (LRKELAEMRLQDQQLARQLMRLRGDINKLKIEQT) forms a coiled coil.

Belongs to the FAM167 (SEC) family.

The sequence is that of Protein FAM167A (Fam167a) from Mus musculus (Mouse).